Consider the following 217-residue polypeptide: Phosphatidylserine decarboxylase proenzyme (217 aa).

Catalysis depends on S182, which acts as the Schiff-base intermediate with substrate; via pyruvic acid. S182 is modified (pyruvic acid (Ser); by autocatalysis).

This sequence belongs to the phosphatidylserine decarboxylase family. PSD-A subfamily. Heterodimer of a large membrane-associated beta subunit and a small pyruvoyl-containing alpha subunit. Requires pyruvate as cofactor. Post-translationally, is synthesized initially as an inactive proenzyme. Formation of the active enzyme involves a self-maturation process in which the active site pyruvoyl group is generated from an internal serine residue via an autocatalytic post-translational modification. Two non-identical subunits are generated from the proenzyme in this reaction, and the pyruvate is formed at the N-terminus of the alpha chain, which is derived from the carboxyl end of the proenzyme. The post-translation cleavage follows an unusual pathway, termed non-hydrolytic serinolysis, in which the side chain hydroxyl group of the serine supplies its oxygen atom to form the C-terminus of the beta chain, while the remainder of the serine residue undergoes an oxidative deamination to produce ammonia and the pyruvoyl prosthetic group on the alpha chain.

Its subcellular location is the cell membrane. It catalyses the reaction a 1,2-diacyl-sn-glycero-3-phospho-L-serine + H(+) = a 1,2-diacyl-sn-glycero-3-phosphoethanolamine + CO2. The protein operates within phospholipid metabolism; phosphatidylethanolamine biosynthesis; phosphatidylethanolamine from CDP-diacylglycerol: step 2/2. Functionally, catalyzes the formation of phosphatidylethanolamine (PtdEtn) from phosphatidylserine (PtdSer). The chain is Phosphatidylserine decarboxylase proenzyme from Prosthecochloris aestuarii (strain DSM 271 / SK 413).